The chain runs to 263 residues: Metaxin-2 (263 aa).

Ser2 carries the N-acetylserine modification.

The protein belongs to the metaxin family. As to quaternary structure, interacts with MTX1/metaxin-1. Associates with the mitochondrial contact site and cristae organizing system (MICOS) complex, composed of at least MICOS10/MIC10, CHCHD3/MIC19, CHCHD6/MIC25, APOOL/MIC27, IMMT/MIC60, APOO/MIC23/MIC26 and QIL1/MIC13. This complex was also known under the names MINOS or MitOS complex. The MICOS complex associates with mitochondrial outer membrane proteins SAMM50, MTX1 and MTX2 (together described as components of the mitochondrial outer membrane sorting assembly machinery (SAM) complex) and DNAJC11, mitochondrial inner membrane protein TMEM11 and with HSPA9. The MICOS and SAM complexes together with DNAJC11 are part of a large protein complex spanning both membranes termed the mitochondrial intermembrane space bridging (MIB) complex.

It localises to the mitochondrion outer membrane. The protein resides in the mitochondrion. Involved in transport of proteins into the mitochondrion. The polypeptide is Metaxin-2 (MTX2) (Homo sapiens (Human)).